A 408-amino-acid chain; its full sequence is Histidine--tRNA ligase (408 aa).

Belongs to the class-II aminoacyl-tRNA synthetase family. Homodimer.

It is found in the cytoplasm. The catalysed reaction is tRNA(His) + L-histidine + ATP = L-histidyl-tRNA(His) + AMP + diphosphate + H(+). This is Histidine--tRNA ligase from Campylobacter jejuni subsp. jejuni serotype O:2 (strain ATCC 700819 / NCTC 11168).